The following is a 177-amino-acid chain: tRNA (cytidine(56)-2'-O)-methyltransferase (177 aa).

S-adenosyl-L-methionine-binding positions include L83 and 108–112; that span reads GAEKV.

The protein belongs to the aTrm56 family. As to quaternary structure, homodimer.

The protein localises to the cytoplasm. It carries out the reaction cytidine(56) in tRNA + S-adenosyl-L-methionine = 2'-O-methylcytidine(56) in tRNA + S-adenosyl-L-homocysteine + H(+). Functionally, specifically catalyzes the AdoMet-dependent 2'-O-ribose methylation of cytidine at position 56 in tRNAs. The protein is tRNA (cytidine(56)-2'-O)-methyltransferase of Nitrosopumilus maritimus (strain SCM1).